The primary structure comprises 389 residues: (2R)-sulfolactate sulfo-lyase subunit beta (389 aa).

The protein belongs to the UxaA family. In terms of assembly, (2R)-sulfolactate sulfo-lyase is composed of a SuyA and a SuyB subunit.

It is found in the cytoplasm. It catalyses the reaction (2R)-3-sulfolactate = sulfite + pyruvate + H(+). Its function is as follows. Together with SuyA, desulfonates sulfolactate to pyruvate and sulfite. The chain is (2R)-sulfolactate sulfo-lyase subunit beta (suyB) from Chromohalobacter salexigens (strain ATCC BAA-138 / DSM 3043 / CIP 106854 / NCIMB 13768 / 1H11).